Consider the following 84-residue polypeptide: ATP synthase subunit c (84 aa).

The next 2 membrane-spanning stretches (helical) occupy residues I9 to I29 and I54 to I74.

It belongs to the ATPase C chain family. As to quaternary structure, F-type ATPases have 2 components, F(1) - the catalytic core - and F(0) - the membrane proton channel. F(1) has five subunits: alpha(3), beta(3), gamma(1), delta(1), epsilon(1). F(0) has three main subunits: a(1), b(2) and c(10-14). The alpha and beta chains form an alternating ring which encloses part of the gamma chain. F(1) is attached to F(0) by a central stalk formed by the gamma and epsilon chains, while a peripheral stalk is formed by the delta and b chains.

Its subcellular location is the cell inner membrane. F(1)F(0) ATP synthase produces ATP from ADP in the presence of a proton or sodium gradient. F-type ATPases consist of two structural domains, F(1) containing the extramembraneous catalytic core and F(0) containing the membrane proton channel, linked together by a central stalk and a peripheral stalk. During catalysis, ATP synthesis in the catalytic domain of F(1) is coupled via a rotary mechanism of the central stalk subunits to proton translocation. Its function is as follows. Key component of the F(0) channel; it plays a direct role in translocation across the membrane. A homomeric c-ring of between 10-14 subunits forms the central stalk rotor element with the F(1) delta and epsilon subunits. The chain is ATP synthase subunit c from Haemophilus ducreyi (strain 35000HP / ATCC 700724).